A 109-amino-acid polypeptide reads, in one-letter code: Small ribosomal subunit protein bS20 (109 aa).

The segment at 1–26 (MANIKSAKKRAIQSEKRRKHNASRRS) is disordered.

Belongs to the bacterial ribosomal protein bS20 family.

In terms of biological role, binds directly to 16S ribosomal RNA. This chain is Small ribosomal subunit protein bS20, found in Hamiltonella defensa subsp. Acyrthosiphon pisum (strain 5AT).